Reading from the N-terminus, the 133-residue chain is Major seminal plasma glycoprotein PSP-I (133 aa).

The signal sequence occupies residues 1-24 (MKLGSAIPWALLFSTATLISTGWG). Cys-30 and Cys-51 are oxidised to a cystine. In terms of domain architecture, CUB spans 30–130 (CGGRLTDDYG…SPYEIIFLRD (101 aa)). Asn-71 carries N-linked (GlcNAc...) (complex) asparagine glycosylation. A disulfide bridge links Cys-74 with Cys-95.

As to quaternary structure, monomer or heterodimer with PSP-II (depending on the type of glycosylation of PSP-I). Seminal plasma or sperm.

It is found in the secreted. In terms of biological role, not yet identified, major porcine seminal plasma protein. Can bind soybean trypsin inhibitor after deglycosylation. In Sus scrofa (Pig), this protein is Major seminal plasma glycoprotein PSP-I.